The chain runs to 848 residues: Nuclear cap-binding protein subunit 1 (848 aa).

One can recognise an MIF4G domain in the interval 8 to 228 (LLRIGEKGPE…DLLDRIQSLA (221 aa)). Positions 767–786 (EDDKPSAMDVDSENGNPKKS) are disordered.

It belongs to the NCBP1 family. As to quaternary structure, component of the nuclear cap-binding complex (CBC), a heterodimer composed of ABH1/CBP80 and CBP20 that interacts with m7GpppG-capped RNA. As to expression, expressed in all tissues analyzed, including roots, stems, leaves and flowers.

The protein localises to the nucleus. The protein resides in the cytoplasm. Functionally, component of the cap-binding complex (CBC), which binds cotranscriptionally to the 5'-cap of pre-mRNAs and is involved in various processes such as pre-mRNA splicing and RNA-mediated gene silencing (RNAi) by microRNAs (miRNAs). The CBC complex is involved in miRNA-mediated RNA interference and is required for primary miRNA processing. In the CBC complex, ABH1/CBP80 does not bind directly capped RNAs (m7GpppG-capped RNA) but is required to stabilize the movement of the N-terminal loop of CBP20 and lock the CBC into a high affinity cap-binding state with the cap structure. Involved in flowering regulation, possibly by regulating pre-mRNA splicing of FLC gene. Acts as a negative regulator of abscisic acid signaling in guard cells. This chain is Nuclear cap-binding protein subunit 1 (ABH1), found in Arabidopsis thaliana (Mouse-ear cress).